Consider the following 49-residue polypeptide: Unknown protein from spot 75 of 2D-PAGE of etiolated coleoptile (49 aa).

This chain is Unknown protein from spot 75 of 2D-PAGE of etiolated coleoptile, found in Zea mays (Maize).